Here is a 1141-residue protein sequence, read N- to C-terminus: LRR receptor-like serine/threonine-protein kinase RGI1 (1141 aa).

Positions 1–33 (MSLHSLIFFSSSSSSLLFSFFFIFIFCFSLSDA) are cleaved as a signal peptide. Topologically, residues 34-726 (EQNPEASILY…DASRTRKLRL (693 aa)) are extracellular. Cys69 and Cys77 are disulfide-bonded. Asn71 is a glycosylation site (N-linked (GlcNAc...) asparagine). LRR repeat units follow at residues 80 to 104 (QGFI…LPAF), 105 to 128 (RSLQ…LGDC), 130 to 152 (GLKV…LSKL), 153 to 176 (RNLE…ISKC), 178 to 200 (KLKS…LGKL), 202 to 225 (GLEV…IGDC), 226 to 249 (SNLT…LGKL), 250 to 273 (KKLE…LGNC), 275 to 297 (ELVD…IGQL), 298 to 321 (TKLE…IGNC), 322 to 345 (SNLK…IGRL), 347 to 369 (FLEE…ISNC), 370 to 392 (SSLV…ELGT), 394 to 417 (TKLT…LADC), 418 to 441 (TDLQ…LFML), 443 to 464 (NLTK…EIGN), 465 to 489 (CSSL…IGSL), 490 to 513 (KKIN…IGSC), 514 to 537 (SELQ…VSSL), 538 to 561 (SGLQ…LGRL), 563 to 585 (SLNK…LGMC), 586 to 609 (SGLQ…LGDI), 610 to 634 (ENLE…IASL), 636 to 657 (KLSI…LANI), and 658 to 682 (ENLV…LFRQ). The N-linked (GlcNAc...) asparagine glycan is linked to Asn116. 2 short sequence motifs (small peptide recognition) span residues 185–186 (FD) and 207–210 (RIGG). Asn227 carries an N-linked (GlcNAc...) asparagine glycan. Short sequence motifs (small peptide recognition) lie at residues 230-235 (VLGLAE) and Tyr258. Asn272 carries an N-linked (GlcNAc...) asparagine glycan. The short motif at 280-282 (FLY) is the Small peptide recognition element. Residue Asn320 is glycosylated (N-linked (GlcNAc...) asparagine). 2 consecutive short sequence motifs (small peptide recognition) follow at residues 328 to 331 (DLSL) and 350 to 352 (EFM). N-linked (GlcNAc...) asparagine glycosylation occurs at Asn368. 2 short sequence motifs (small peptide recognition) span residues 398 to 402 (LFFAW) and 424 to 427 (DLSR). Asn443 carries an N-linked (GlcNAc...) asparagine glycan. A Small peptide recognition motif is present at residues 446–450 (KLLLI). N-linked (GlcNAc...) asparagine glycosylation occurs at Asn464. The short motif at 470 to 472 (RLR) is the Small peptide recognition element. N-linked (GlcNAc...) asparagine glycosylation is present at Asn523. Asn617 carries N-linked (GlcNAc...) asparagine glycosylation. Asn664 carries N-linked (GlcNAc...) asparagine glycosylation. The helical transmembrane segment at 727-747 (TLALLITLTVVLMILGAVAVI) threads the bilayer. Residues 748–1141 (RARRNIDNER…LLYSSSSSIE (394 aa)) are Cytoplasmic-facing. In terms of domain architecture, Protein kinase spans 786-1074 (LVEPNVIGKG…EIKQEREEYA (289 aa)). Residues 792 to 800 (IGKGCSGVV) and Lys814 each bind ATP. Phosphotyrosine occurs at positions 868 and 906. Asp919 functions as the Proton acceptor in the catalytic mechanism. A phosphotyrosine mark is found at Tyr962 and Tyr969.

It belongs to the protein kinase superfamily. Ser/Thr protein kinase family. Interacts with beet curly top virus AL4/C4. Binds to RGF peptides such as RGF1, GLV5/CLEL1/RGF2, GLV7/CLEL3/RGF3, GLV3/RGF4, GLV10/CLEL7/RGF5 and RGF10/CLELN; these interactions trigger the formation of heterodimers with SERK1, SERK2 or BAK1/SERK3 via LRR regions. Interacts with UBP13. Phosphorylated and ubiquitinated upon interaction with RGF1, thus leading to activation a subsequent degradation. Stabilized by UBP12 and UBP13-mediated deubiquitination. In terms of processing, autophosphorylated. In terms of tissue distribution, expressed in roots.

Its subcellular location is the cell membrane. It carries out the reaction L-seryl-[protein] + ATP = O-phospho-L-seryl-[protein] + ADP + H(+). It catalyses the reaction L-threonyl-[protein] + ATP = O-phospho-L-threonyl-[protein] + ADP + H(+). Functionally, together with RGI2, RGI3, RGI4 and RGI5, acts as a receptor of RGF peptides (e.g. RGF1, GLV5/CLEL1/RGF2, GLV7/CLEL3/RGF3, GLV3/RGF4, GLV10/CLEL7/RGF5 and RGF10/CLELN), peptide hormones which maintain the postembryonic root stem cell niche by regulating the expression levels and patterns of the transcription factor PLETHORA (PLT, e.g. PLT1 and PLT2). Links RGF peptides signal with their downstream components. The protein is LRR receptor-like serine/threonine-protein kinase RGI1 of Arabidopsis thaliana (Mouse-ear cress).